The sequence spans 380 residues: Cyclohexane-1-carbonyl-CoA dehydrogenase (380 aa).

The protein belongs to the acyl-CoA dehydrogenase family. In terms of assembly, homotetramer. FAD is required as a cofactor.

It carries out the reaction cyclohexane-1-carbonyl-CoA + oxidized [electron-transfer flavoprotein] + H(+) = cyclohex-1-ene-1-carbonyl-CoA + reduced [electron-transfer flavoprotein]. In terms of biological role, acyl-CoA dehydrogenase involved in the anaerobic degradation of cyclohexane carboxylic acid (CHC). Catalyzes the 1,2-dehydrogenation of cyclohexane-1-carbonyl-CoA (CHCoA) to cyclohex-1-ene-1-carbonyl-CoA (CHeneCoA). An alternative substrate, cyclohex-3-ene-1-carboxyl-CoA can be converted to the corresponding cyclohexadiene-1-carboxyl-CoA isomers (30% rate compared to CHC). In Geobacter metallireducens (strain ATCC 53774 / DSM 7210 / GS-15), this protein is Cyclohexane-1-carbonyl-CoA dehydrogenase.